Reading from the N-terminus, the 292-residue chain is ATP-dependent Clp protease proteolytic subunit 4, chloroplastic (292 aa).

Residues 1-65 (MGTLSLSSSL…LRFANASIEM (65 aa)) constitute a chloroplast transit peptide. Serine 66 carries the N-acetylserine modification. Catalysis depends on serine 158, which acts as the Nucleophile. Residue histidine 183 is part of the active site.

The protein belongs to the peptidase S14 family. In terms of assembly, component of the chloroplastic Clp protease core complex which consist of at least 16 proteins: CLPP4 (3 copies), CLPP5 (3 copies), CLPR4 (2 copies), ClpP1 (1 copy), CLPP6 (1 copy), CLPR2 (1 copy), CLPT1 (1 copy), CLPT2 (1 copy) and 3 copies of CLPP3 and/or CLPR1 and/or CLPR3. Interacts with CHIP. The core complex is organized in two heptameric rings, one containing CLPP3,4,5,6 in a 1:2:3:1 ratio and the other CLPP1 and CLPR1,2,3,4 in a 3:1:1:1:1 ratio. Post-translationally, ubiquitinated by CHIP. As to expression, mostly expressed in leaves. Also detected in stems, and to a lower extent, in roots (at protein level).

The protein localises to the plastid. The protein resides in the chloroplast stroma. The catalysed reaction is Hydrolysis of proteins to small peptides in the presence of ATP and magnesium. alpha-casein is the usual test substrate. In the absence of ATP, only oligopeptides shorter than five residues are hydrolyzed (such as succinyl-Leu-Tyr-|-NHMec, and Leu-Tyr-Leu-|-Tyr-Trp, in which cleavage of the -Tyr-|-Leu- and -Tyr-|-Trp bonds also occurs).. In terms of biological role, cleaves peptides in various proteins in a process that requires ATP hydrolysis. Has a chymotrypsin-like activity. Plays a major role in the degradation of misfolded proteins. Essential protein required for chloroplast development and integrity. Essential for Embryogenesis. In Arabidopsis thaliana (Mouse-ear cress), this protein is ATP-dependent Clp protease proteolytic subunit 4, chloroplastic.